The chain runs to 103 residues: Large ribosomal subunit protein uL24 (103 aa).

It belongs to the universal ribosomal protein uL24 family. As to quaternary structure, part of the 50S ribosomal subunit.

One of two assembly initiator proteins, it binds directly to the 5'-end of the 23S rRNA, where it nucleates assembly of the 50S subunit. Its function is as follows. One of the proteins that surrounds the polypeptide exit tunnel on the outside of the subunit. The sequence is that of Large ribosomal subunit protein uL24 from Geobacillus stearothermophilus (Bacillus stearothermophilus).